The primary structure comprises 279 residues: HTH-type transcriptional regulator BhcR (279 aa).

The span at 1–13 (MSVQIRKRGRPRG) shows a compositional bias: basic residues. The tract at residues 1 to 21 (MSVQIRKRGRPRGRAGGLGAE) is disordered. Residues 26–87 (IRALDRALDI…SQTQAWHVGP (62 aa)) enclose the HTH iclR-type domain. The segment at residues 47–66 (LTEIAQRLDMAPSTVHRVLV) is a DNA-binding region (H-T-H motif). The IclR-ED domain occupies 102-271 (LVERARPLLR…ARELSFGMAP (170 aa)).

Its function is as follows. Transcriptional regulator of the bhc gene cluster involved in glycolate and glyoxylate assimilation via the beta-hydroxyaspartate cycle (BHAC). Glyoxylate negatively affects the interaction of BhcR with the promoter region of the bhc gene cluster. The sequence is that of HTH-type transcriptional regulator BhcR from Paracoccus denitrificans (strain Pd 1222).